The primary structure comprises 315 residues: Gamma-hemolysin component C (315 aa).

A signal peptide spans 1 to 29; that stretch reads MLKNKILATTLSVSLLAPLANPLLENAKA.

This sequence belongs to the aerolysin family. As to quaternary structure, toxicity requires sequential binding and synergistic association of a class S and a class F component which form heterooligomeric complexes. HlgC (class S) associates with HlgB (class F) thus forming an CB toxin.

Functionally, toxin that seems to act by forming pores in the membrane of the cell. Has a hemolytic and a leucotoxic activity. The chain is Gamma-hemolysin component C (hlgC) from Staphylococcus aureus (strain MSSA476).